We begin with the raw amino-acid sequence, 136 residues long: Large-conductance mechanosensitive channel (136 aa).

Over 1-16 (MGLLSEFKAFAVKGNV) the chain is Cytoplasmic. A helical membrane pass occupies residues 17–45 (VDMAVGIIIGAAFGKIVSSFVGDVIMPPI). At 46 to 73 (GLLIGGVDFSDLAITLKAEGDVPAVVLA) the chain is on the extracellular side. Residues 74-93 (YRKFIQTVLNFVIVAFAIFM) form a helical membrane-spanning segment. Residues 94–136 (GVKAINRLKREEAVAPSEPPVPSAEETLLTEIRDLLKAQQNKS) lie on the Cytoplasmic side of the membrane.

Belongs to the MscL family. As to quaternary structure, homopentamer.

Its subcellular location is the cell inner membrane. Its function is as follows. Channel that opens in response to stretch forces in the membrane lipid bilayer. Forms a nonselective ion channel with a conductance of about 4 nanosiemens. May participate in the regulation of osmotic pressure changes within the cell. The chain is Large-conductance mechanosensitive channel from Pseudomonas fluorescens.